The following is a 483-amino-acid chain: MTKMDIRGAVDAAVPTNIIAAKAAEVRANKVNWQSYLQGQMISSEDCEFIQRFEMKRSPEEKQEMLQTEGSQCAKTFINLMTHISKEQTVQYILTLVDDTLQENHQRVSIFFDYAKRSKNTAWSYFLPMLNRQDLFTVHMAARIIAKLAAWGKELMEGSDLNYYFNWIKTQLSSQKLRGSGVTAETGTVSSSDSSQYVQCVAGCLQLMLRVNEYRFAWVEADGVNCIMGVLSNKCGFQLQYQMIFSVWLLAFSPQMCEHLRRYNIIPVLSDILQESVKEKVTRIILAAFRNFLEKSVERETRQEYALAMIQCKVLKQLENLEQQKYDDEDISEDIKFLLEKLGESVQDLSSFDEYSSELKSGRLEWSPVHKSEKFWRENAARLNEKNYELLKILTKLLEVSDDPQVLAVAAHDVGEYVRHYPRGKRVIEQLGGKQLVMNHMHHEDQQVRYNALLAVQKLMVHNWEYLGKQLQSEQPQTAAARS.

Position 483 is a phosphoserine (S483).

Belongs to the V-ATPase H subunit family. As to quaternary structure, V-ATPase is a heteromultimeric enzyme made up of two complexes: the ATP-hydrolytic V1 complex and the proton translocation V0 complex. The V1 complex consists of three catalytic AB heterodimers that form a heterohexamer, three peripheral stalks each consisting of EG heterodimers, one central rotor including subunits D and F, and the regulatory subunits C and H. The proton translocation complex V0 consists of the proton transport subunit a, a ring of proteolipid subunits c9c'', rotary subunit d, subunits e and f, and the accessory subunits ATP6AP1/Ac45 and ATP6AP2/PRR. Interacts with AP2M1. As to expression, expressed in brain (at protein level).

It is found in the cytoplasmic vesicle. Its subcellular location is the clathrin-coated vesicle membrane. Functionally, subunit of the V1 complex of vacuolar(H+)-ATPase (V-ATPase), a multisubunit enzyme composed of a peripheral complex (V1) that hydrolyzes ATP and a membrane integral complex (V0) that translocates protons. V-ATPase is responsible for acidifying and maintaining the pH of intracellular compartments and in some cell types, is targeted to the plasma membrane, where it is responsible for acidifying the extracellular environment. Subunit H is essential for V-ATPase activity, but not for the assembly of the complex. Involved in the endocytosis mediated by clathrin-coated pits, required for the formation of endosomes. The chain is V-type proton ATPase subunit H (ATP6V1H) from Bos taurus (Bovine).